Consider the following 185-residue polypeptide: UPF0397 protein AYWB_013 (185 aa).

Transmembrane regions (helical) follow at residues 13 to 33 (IGLSTTIFFVLSCFASIPVGF), 42 to 62 (AFLAFIAVAFGPSVGFYVGLI), 69 to 89 (FFLFGNVSWNWVLCSALIGFI), 109 to 129 (IVYFWLYQVACNFIIWGFFAP), and 148 to 168 (FLIVISNILAYSVVGIKLMTI).

The protein belongs to the UPF0397 family.

The protein resides in the cell membrane. In Aster yellows witches'-broom phytoplasma (strain AYWB), this protein is UPF0397 protein AYWB_013.